A 360-amino-acid polypeptide reads, in one-letter code: MFVARSIAADHKDLIHDVSFDFHGRRMATCSSDQSVKVWDKSESGDWHCTASWKTHSGSVWRVTWAHPEFGQVLASCSFDRTAAVWEEIVGESNDKLRGQSHWVKRTTLVDSRTSVTDVKFAPKHMGLMLATCSADGIVRIYEAPDVMNLSQWSLQHEISCKLSCSCISWNPSSSRAHSPMIAVGSDDSSPNAMAKVQIFEYNENTRKYAKAETLMTVTDPVHDIAFAPNLGRSFHILAIATKDVRIFTLKPVRKELTSSGGPTKFEIHIVAHFDNHNSQVWRVSWNITGTVLASSGDDGCVRLWKANYMDNWKCTGILKGNGSPVNGSSQQGTSNPSLGSNIPSLQNSLNGSSAGRKHS.

WD repeat units lie at residues aspartate 10–cysteine 49, threonine 55–lysine 96, aspartate 111–glutamine 152, serine 160–alanine 210, threonine 217–threonine 258, and asparagine 276–cysteine 315. Residue lysine 12 forms a Glycyl lysine isopeptide (Lys-Gly) (interchain with G-Cter in SUMO2) linkage. Phosphoserine is present on residues serine 179 and serine 190. The span at serine 324–serine 354 shows a compositional bias: polar residues. Residues serine 324 to serine 360 are disordered.

Belongs to the WD repeat SEC13 family. Component of the Nup107-160 subcomplex of the nuclear pore complex (NPC). The Nup107-160 subcomplex includes NUP160, NUP133, NUP107, NUP98, NUP85, NUP43, NUP37, SEH1 and SEC13. The SEH1 subunit appears to be only weakly associated with the Nup107-160 subcomplex. Component of the GATOR2 subcomplex, composed of MIOS, SEC13, SEH1L, WDR24 and WDR59. The GATOR2 complex interacts with CASTOR1 and CASTOR2; the interaction is negatively regulated by arginine. The GATOR2 complex interacts with SESN1, SESN2 and SESN3; the interaction is negatively regulated by amino acids. SESN1, SESN2 and SESN3 convey leucine availability via direct interaction with SEH1L and WDR24.

It is found in the chromosome. Its subcellular location is the centromere. It localises to the kinetochore. The protein localises to the nucleus. The protein resides in the nuclear pore complex. It is found in the lysosome membrane. With respect to regulation, the GATOR2 complex is negatively regulated by the upstream amino acid sensors CASTOR1 and SESN2, which sequester the GATOR2 complex in absence of amino acids. In the presence of abundant amino acids, GATOR2 is released from CASTOR1 and SESN2 and activated. Its function is as follows. Component of the Nup107-160 subcomplex of the nuclear pore complex (NPC). The Nup107-160 subcomplex is required for the assembly of a functional NPC. The Nup107-160 subcomplex is also required for normal kinetochore microtubule attachment, mitotic progression and chromosome segregation. This subunit plays a role in recruitment of the Nup107-160 subcomplex to the kinetochore. In terms of biological role, as a component of the GATOR2 complex, functions as an activator of the amino acid-sensing branch of the mTORC1 signaling pathway. The GATOR2 complex indirectly activates mTORC1 through the inhibition of the GATOR1 subcomplex. GATOR2 probably acts as an E3 ubiquitin-protein ligase toward GATOR1. In the presence of abundant amino acids, the GATOR2 complex mediates ubiquitination of the NPRL2 core component of the GATOR1 complex, leading to GATOR1 inactivation. In the absence of amino acids, GATOR2 is inhibited, activating the GATOR1 complex. Within the GATOR2 complex, SEC13 and SEH1L are required to stabilize the complex. This is Nucleoporin SEH1 (SEH1L) from Pongo abelii (Sumatran orangutan).